Consider the following 104-residue polypeptide: Nucleoid-associated protein Moth_0028 (104 aa).

The protein belongs to the YbaB/EbfC family. As to quaternary structure, homodimer.

It is found in the cytoplasm. The protein resides in the nucleoid. Binds to DNA and alters its conformation. May be involved in regulation of gene expression, nucleoid organization and DNA protection. The chain is Nucleoid-associated protein Moth_0028 from Moorella thermoacetica (strain ATCC 39073 / JCM 9320).